The following is a 204-amino-acid chain: E2 ubiquitin-conjugating enzyme PEX4 (204 aa).

Residues 2–196 (SAEKRLLQEY…IEYYVGRYSI (195 aa)) form the UBC core domain. Cys-133 functions as the Glycyl thioester intermediate in the catalytic mechanism.

Belongs to the ubiquitin-conjugating enzyme family.

It localises to the peroxisome membrane. It catalyses the reaction S-ubiquitinyl-[E1 ubiquitin-activating enzyme]-L-cysteine + [E2 ubiquitin-conjugating enzyme]-L-cysteine = [E1 ubiquitin-activating enzyme]-L-cysteine + S-ubiquitinyl-[E2 ubiquitin-conjugating enzyme]-L-cysteine.. It functions in the pathway protein modification; protein ubiquitination. Functionally, E2 ubiquitin-conjugating enzyme involved in peroxisome biosynthesis. Acts late in peroxisomal matrix protein import, after matrix protein translocation. Required for both monoubiquitination and polyubiquitination of coreceptor PEX20. polyubiquitination of PEX20 at conserved lysine 'Lys-19' near the N-terminus leads to its and proteasomal degradation, whereas a monoubiquitination at the conserved cysteine 'Cys-8' is essential for its recycling. The protein is E2 ubiquitin-conjugating enzyme PEX4 of Komagataella phaffii (strain GS115 / ATCC 20864) (Yeast).